The sequence spans 386 residues: Tubulin beta-1 chain (386 aa).

Positions 7, 76, 80, 81, 82, 142, and 164 each coordinate GTP. Glu-7 serves as a coordination point for Mg(2+). A disordered region spans residues 363–386 (YQDATADEEGEYEDEEEDLQAEDM). Residues 367–386 (TADEEGEYEDEEEDLQAEDM) are compositionally biased toward acidic residues.

This sequence belongs to the tubulin family. Dimer of alpha and beta chains. A typical microtubule is a hollow water-filled tube with an outer diameter of 25 nm and an inner diameter of 15 nM. Alpha-beta heterodimers associate head-to-tail to form protofilaments running lengthwise along the microtubule wall with the beta-tubulin subunit facing the microtubule plus end conferring a structural polarity. Microtubules usually have 13 protofilaments but different protofilament numbers can be found in some organisms and specialized cells. It depends on Mg(2+) as a cofactor.

The protein resides in the cytoplasm. It is found in the cytoskeleton. Tubulin is the major constituent of microtubules, a cylinder consisting of laterally associated linear protofilaments composed of alpha- and beta-tubulin heterodimers. Microtubules grow by the addition of GTP-tubulin dimers to the microtubule end, where a stabilizing cap forms. Below the cap, tubulin dimers are in GDP-bound state, owing to GTPase activity of alpha-tubulin. This is Tubulin beta-1 chain (TUBB1) from Avena sativa (Oat).